The following is a 127-amino-acid chain: Histone H2B type 1-A (127 aa).

A disordered region spans residues 1–36 (MPEVSSKGATISKKGFKKAVVKTQKKEGKKRKRTRK). At Pro-2 the chain carries N-acetylproline. Lys-7, Lys-13, Lys-14, Lys-17, Lys-18, Lys-22, and Lys-25 each carry N6-acetyllysine; alternate. Lys-7, Lys-13, Lys-14, Lys-17, Lys-18, Lys-22, Lys-25, and Lys-36 each carry N6-crotonyllysine; alternate. 2 positions are modified to N6-lactoyllysine; alternate: Lys-7 and Lys-13. Residue Lys-7 forms a Glycyl lysine isopeptide (Lys-Gly) (interchain with G-Cter in SUMO2); alternate linkage. An N6-lactoyllysine; alternate mark is found at Lys-17, Lys-18, Lys-22, and Lys-25. Residue Lys-22 forms a Glycyl lysine isopeptide (Lys-Gly) (interchain with G-Cter in SUMO2); alternate linkage. Lys-36 is subject to N6-succinyllysine; alternate. Lys-36 is covalently cross-linked (Glycyl lysine isopeptide (Lys-Gly) (interchain with G-Cter in ubiquitin); alternate). Phosphoserine is present on Ser-38. Lys-45 is modified (N6-lactoyllysine; alternate). Lys-48 carries the N6-methyllysine modification. Lys-59 is modified (N6,N6-dimethyllysine). At Arg-81 the chain carries Dimethylated arginine. Residue Ser-86 is modified to Phosphoserine. Lys-87 is subject to N6-acetyllysine; alternate. Lys-87 carries the N6-lactoyllysine; alternate modification. Position 87 is an N6,N6,N6-trimethyllysine; alternate (Lys-87). Omega-N-methylarginine occurs at positions 88 and 94. Lys-110 bears the N6-lactoyllysine; alternate mark. Lys-110 is subject to N6-methyllysine. At Thr-117 the chain carries Phosphothreonine. Residues Lys-118 and Lys-122 each carry the N6-lactoyllysine; alternate modification. An N6-succinyllysine; alternate mark is found at Lys-118 and Lys-122. N6-methylated lysine; alternate is present on Lys-118. A Glycyl lysine isopeptide (Lys-Gly) (interchain with G-Cter in ubiquitin); alternate cross-link involves residue Lys-122.

It belongs to the histone H2B family. As to quaternary structure, the nucleosome is a histone octamer containing two molecules each of H2A, H2B, H3 and H4 assembled in one H3-H4 heterotetramer and two H2A-H2B heterodimers. Monoubiquitination at Lys-36 (H2BK34Ub) by the MSL1/MSL2 dimer is required for histone H3 'Lys-4' (H3K4me) and 'Lys-79' (H3K79me) methylation and transcription activation at specific gene loci, such as HOXA9 and MEIS1 loci. Similarly, monoubiquitination at Lys-122 (H2BK120Ub) by the RNF20/40 complex gives a specific tag for epigenetic transcriptional activation and is also prerequisite for histone H3 'Lys-4' and 'Lys-79' methylation. It also functions cooperatively with the FACT dimer to stimulate elongation by RNA polymerase II. H2BK120Ub also acts as a regulator of mRNA splicing: deubiquitination by USP49 is required for efficient cotranscriptional splicing of a large set of exons. In terms of processing, crotonylation (Kcr) is specifically present in male germ cells and marks testis-specific genes in post-meiotic cells, including X-linked genes that escape sex chromosome inactivation in haploid cells. Crotonylation marks active promoters and enhancers and confers resistance to transcriptional repressors. It is also associated with post-meiotically activated genes on autosomes. Post-translationally, acetylated during spermatogenesis. Acetylated form is most abundant in spermatogonia compared to spermatocytes and round spermatids. Phosphorylated at Thr-117 in spermatogonia, spermatocytes and round spermatids. In terms of processing, methylated at Lys-118 in spermatogonia, spermatocytes and round spermatids. Post-translationally, lactylated in macrophages by EP300/P300 by using lactoyl-CoA directly derived from endogenous or exogenous lactate, leading to stimulates gene transcription. Mainly expressed in testis, and the corresponding protein is also present in mature sperm (at protein level). Also found in some fat cells.

The protein localises to the nucleus. It is found in the chromosome. In terms of biological role, variant histone specifically required to direct the transformation of dissociating nucleosomes to protamine in male germ cells. Entirely replaces classical histone H2B prior nucleosome to protamine transition and probably acts as a nucleosome dissociating factor that creates a more dynamic chromatin, facilitating the large-scale exchange of histones. Core component of nucleosome. Nucleosomes wrap and compact DNA into chromatin, limiting DNA accessibility to the cellular machineries which require DNA as a template. Histones thereby play a central role in transcription regulation, DNA repair, DNA replication and chromosomal stability. DNA accessibility is regulated via a complex set of post-translational modifications of histones, also called histone code, and nucleosome remodeling. Also found in fat cells, its function and the presence of post-translational modifications specific to such cells are still unclear. The protein is Histone H2B type 1-A of Homo sapiens (Human).